Reading from the N-terminus, the 430-residue chain is Enolase (430 aa).

Glutamine 167 is a (2R)-2-phosphoglycerate binding site. The active-site Proton donor is the glutamate 209. Residues aspartate 246, glutamate 289, and aspartate 316 each coordinate Mg(2+). 4 residues coordinate (2R)-2-phosphoglycerate: lysine 341, arginine 370, serine 371, and lysine 392. The active-site Proton acceptor is lysine 341.

Belongs to the enolase family. In terms of assembly, component of the RNA degradosome, a multiprotein complex involved in RNA processing and mRNA degradation. Requires Mg(2+) as cofactor.

It localises to the cytoplasm. The protein localises to the secreted. It is found in the cell surface. The catalysed reaction is (2R)-2-phosphoglycerate = phosphoenolpyruvate + H2O. It participates in carbohydrate degradation; glycolysis; pyruvate from D-glyceraldehyde 3-phosphate: step 4/5. Its function is as follows. Catalyzes the reversible conversion of 2-phosphoglycerate (2-PG) into phosphoenolpyruvate (PEP). It is essential for the degradation of carbohydrates via glycolysis. The protein is Enolase of Alteromonas mediterranea (strain DSM 17117 / CIP 110805 / LMG 28347 / Deep ecotype).